The chain runs to 375 residues: Saccharopine dehydrogenase [NAD(+), L-lysine-forming] (375 aa).

Residues arginine 18 and lysine 78 each coordinate L-saccharopine. Residue lysine 78 is the Proton acceptor of the active site. The active-site Proton donor is the histidine 96. Glutamine 101 provides a ligand contact to L-saccharopine. Arginine 130 serves as a coordination point for NAD(+). L-saccharopine contacts are provided by arginine 131 and phenylalanine 135. NAD(+) contacts are provided by residues 203 to 204 (GR), aspartate 227, threonine 231, tyrosine 252, and valine 279. A disulfide bridge links cysteine 205 with cysteine 250. Residue 280-282 (SAD) participates in L-saccharopine binding. 322–325 (IDHL) is an NAD(+) binding site.

This sequence belongs to the AlaDH/PNT family. Monomer.

It carries out the reaction L-saccharopine + NAD(+) + H2O = L-lysine + 2-oxoglutarate + NADH + H(+). Its pathway is amino-acid biosynthesis; L-lysine biosynthesis via AAA pathway; L-lysine from L-alpha-aminoadipate (fungal route): step 3/3. Functionally, catalyzes the NAD(+)-dependent cleavage of saccharopine to L-lysine and 2-oxoglutarate, the final step in the alpha-aminoadipate (AAA) pathway for lysin biosynthesis. The sequence is that of Saccharopine dehydrogenase [NAD(+), L-lysine-forming] from Emericella nidulans (strain FGSC A4 / ATCC 38163 / CBS 112.46 / NRRL 194 / M139) (Aspergillus nidulans).